Consider the following 206-residue polypeptide: Potassium channel B446_29190 (206 aa).

Position 1 (Met1) is a topological domain, cytoplasmic. Residues 2–25 traverse the membrane as a helical segment; that stretch reads NESGRVEAFSDGVFAIAITLLILD. The RxxxFSD motif signature appears at 6 to 12; that stretch reads RVEAFSD. Residues 26–44 are Extracellular-facing; it reads IKVPKADGPGGLWHALGAQ. A short helix H1 region spans residues 31–34; it reads ADGP. The segment at 36 to 42 is short helix H2; that stretch reads GLWHALG. The helical transmembrane segment at 45–70 threads the bilayer; that stretch reads WPSYAAYVVSFLVIGIMWVNHHQVFS. Residues 71 to 76 are Cytoplasmic-facing; that stretch reads YVARVD. Residues 77–102 form a helical membrane-spanning segment; that stretch reads RALMFLNLLVLMVVAAVPWPTAMLAE. The Extracellular segment spans residues 103–110; the sequence is YLREDRAS. Residues 111 to 135 traverse the membrane as a helical segment; sequence HVAAAVYSLVMVAMALAFQALWWHL. The Cytoplasmic segment spans residues 136–147; that stretch reads TRTGHLFDPRVD. The helical transmembrane segment at 148-174 threads the bilayer; sequence APAARATRIRFALGSLGYPLTVGLAFV. At 175-176 the chain is on the extracellular side; it reads SA. The helical transmembrane segment at 177–192 threads the bilayer; that stretch reads PLTLAAHGLLALYYGF. The Cytoplasmic segment spans residues 193–206; sequence NQVPVPTREAAAPS.

This sequence belongs to the TMEM175 family. As to quaternary structure, homotetramer.

The protein resides in the membrane. The catalysed reaction is K(+)(in) = K(+)(out). Potassium channel. This chain is Potassium channel B446_29190, found in Streptomyces collinus (strain DSM 40733 / Tue 365).